The primary structure comprises 3390 residues: Genome polyprotein (3390 aa).

The interaction with host EXOC1 stretch occupies residues 1–15; it reads MNNQRKKTGKPSINM. The Cytoplasmic segment spans residues 1-100; it reads MNNQRKKTGK…MLSIINKRKK (100 aa). The interval 37 to 72 is hydrophobic; homodimerization of capsid protein C; the sequence is LLNGQGPMKLVMAFIAFLRFLAIPPTAGVLARWGTF. Positions 101–114 are cleaved as a propeptide — ER anchor for the capsid protein C, removed in mature form by serine protease NS3; it reads TSLCLMMIMPAALA. The chain crosses the membrane as a helical span at residues 101–120; sequence TSLCLMMIMPAALAFHLTSR. At 121 to 243 the chain is on the extracellular side; the sequence is DGEPRMIVGK…VEKVETWALR (123 aa). Asparagine 183 is a glycosylation site (N-linked (GlcNAc...) asparagine; by host). The chain crosses the membrane as a helical span at residues 244-264; the sequence is HPGFTILALFLAHYIGTSLTQ. Lysine 265 is a topological domain (cytoplasmic). Residues 266 to 280 traverse the membrane as a helical segment; sequence VVIFILLMLVTPSMT. Residues 281-723 lie on the Extracellular side of the membrane; sequence MRCVGVGNRD…VHQIFGSAYT (443 aa). 4 disulfide bridges follow: cysteine 283–cysteine 310, cysteine 340–cysteine 401, cysteine 354–cysteine 385, and cysteine 372–cysteine 396. N-linked (GlcNAc...) asparagine; by host glycosylation occurs at asparagine 347. The fusion peptide stretch occupies residues 378-391; the sequence is DRGWGNGCGLFGKG. An N-linked (GlcNAc...) asparagine; by host glycan is attached at asparagine 433. Intrachain disulfides connect cysteine 463-cysteine 563 and cysteine 580-cysteine 611. Residues 724-744 form a helical membrane-spanning segment; the sequence is ALFSGVSWVMKIGIGVLLTWI. Topologically, residues 745–750 are cytoplasmic; sequence GLNSKN. The helical transmembrane segment at 751–771 threads the bilayer; it reads TSMSFSCIAIGIITLYLGAVV. At 772 to 1193 the chain is on the extracellular side; that stretch reads QADMGCVINW…MIGSNASDRM (422 aa). Disulfide bonds link cysteine 777–cysteine 788, cysteine 828–cysteine 916, cysteine 952–cysteine 996, cysteine 1053–cysteine 1102, cysteine 1064–cysteine 1086, and cysteine 1085–cysteine 1089. 2 N-linked (GlcNAc...) asparagine; by host glycosylation sites follow: asparagine 903 and asparagine 980. 2 N-linked (GlcNAc...) asparagine; by host glycosylation sites follow: asparagine 1132 and asparagine 1188. Residues 1194–1218 form a helical membrane-spanning segment; sequence GMGVTYLALIATFKIQPFLALGFFL. Residues 1219-1224 are Cytoplasmic-facing; the sequence is RKLTSR. A helical transmembrane segment spans residues 1225–1243; it reads ENLLLGVGLAMATTLQLPE. The Lumenal segment spans residues 1244 to 1267; it reads DIEQMANGIALGLMALKLITQFET. Residues 1268–1288 traverse the membrane as a helical segment; the sequence is YQLWTALISLTCSNTMFTLTV. Position 1289 (alanine 1289) is a topological domain, cytoplasmic. The chain crosses the membrane as a helical span at residues 1290–1308; sequence WRTATLILAGVSLLPVCQS. Residues 1309-1315 are Lumenal-facing; the sequence is SSMRKTD. A helical transmembrane segment spans residues 1316-1336; sequence WLPMAVAAMGVPPLPLFIFSL. Over 1337-1344 the chain is Cytoplasmic; it reads KDTLKRRS. The helical transmembrane segment at 1345–1365 threads the bilayer; that stretch reads WPLNEGVMAVGLVSILASSLL. Residues 1366 to 1368 lie on the Lumenal side of the membrane; the sequence is RND. The chain crosses the membrane as a helical span at residues 1369-1389; that stretch reads VPMAGPLVAGGLLIACYVITG. At 1390 to 1443 the chain is on the cytoplasmic side; that stretch reads TSADLTVEKAADITWEEEAEQTGVSHNLMITVDDDGTMRIKDDETENILTVLLK. Residues 1396–1435 form an interacts with and activates NS3 protease region; that stretch reads VEKAADITWEEEAEQTGVSHNLMITVDDDGTMRIKDDETE. The segment at residues 1444–1464 is an intramembrane region (helical); it reads TALLIVSGVFPYSIPATLLVW. Residues 1465 to 2146 are Cytoplasmic-facing; it reads HTWQKQTQRS…VEELPETMET (682 aa). The Peptidase S7 domain maps to 1474–1651; it reads SGVLWDVPSP…NAEPDGPTPE (178 aa). Catalysis depends on charge relay system; for serine protease NS3 activity residues histidine 1524, aspartate 1548, and serine 1608. Residues 1654-1810 enclose the Helicase ATP-binding domain; it reads EEMFKKRNLT…QSNAPIQDEE (157 aa). Residues 1658–1661 form an important for RNA-binding region; sequence KKRN. An ATP-binding site is contributed by 1667 to 1674; the sequence is LHPGSGKT. The DEAH box motif lies at 1758–1761; the sequence is DEAH. One can recognise a Helicase C-terminal domain in the interval 1820-1986; sequence SGNEWITDFA…GIIPALFEPE (167 aa). The residue at position 1862 (lysine 1862) is an N6-acetyllysine; by host. The helical transmembrane segment at 2147–2167 threads the bilayer; that stretch reads LLLLGLMILLTGGAMLFLISG. The Lumenal segment spans residues 2168–2169; the sequence is KG. The segment at residues 2170 to 2190 is an intramembrane region (helical); the sequence is IGKTSIGLICVIASSGMLWMA. A topological domain (lumenal) is located at residue glutamate 2191. Residues 2192 to 2212 form a helical membrane-spanning segment; sequence IPLQWIASAIVLEFFMMVLLI. Residues 2213–2227 are Cytoplasmic-facing; the sequence is PEPEKQRTPQDNQLA. The helical transmembrane segment at 2228 to 2248 threads the bilayer; that stretch reads YVVIGILTLAAIIAANEMGLL. Residues 2249 to 2273 lie on the Lumenal side of the membrane; that stretch reads ETTKRDLGMSKEPGVVSPTSYLDVD. The helical intramembrane region spans 2274–2294; that stretch reads LHPASAWTLYAVATTVITPML. Topologically, residues 2295 to 2305 are lumenal; the sequence is RHTIENSTANV. Asparagine 2300 and asparagine 2304 each carry an N-linked (GlcNAc...) asparagine; by host glycan. Residues 2306–2326 constitute an intramembrane region (helical); it reads SLAAIANQAVVLMGLDKGWPI. Topologically, residues 2327–2346 are lumenal; the sequence is SKMDLGVPLLALGCYSQVNP. The chain crosses the membrane as a helical span at residues 2347-2367; sequence LTLTAAVLLLITHYAIIGPGL. Topologically, residues 2368-2412 are cytoplasmic; it reads QAKATREAQKRTAAGIMKNPTVDGIMTIDLDPVIYDSKFEKQLGQ. A helical membrane pass occupies residues 2413-2433; it reads VMLLVLCAVQLLLMRTSWALC. Over 2434-2458 the chain is Lumenal; it reads EALTLATGPITTLWEGSPGKFWNTT. A glycan (N-linked (GlcNAc...) asparagine; by host) is linked at asparagine 2456. A helical membrane pass occupies residues 2459-2479; the sequence is IAVSMANIFRGSYLAGAGLAF. At 2480 to 3390 the chain is on the cytoplasmic side; the sequence is SIMKSVGTGK…KEEESEGAIW (911 aa). In terms of domain architecture, mRNA cap 0-1 NS5-type MT spans 2492–2753; the sequence is TGSQGETLGE…DVDLGAGTRH (262 aa). Residue serine 2546 participates in S-adenosyl-L-methionine binding. Serine 2546 bears the Phosphoserine mark. Lysine 2551 acts as the For 2'-O-MTase activity in catalysis. An SUMO-interacting motif motif is present at residues 2567–2570; the sequence is VIDL. Positions 2576, 2577, 2594, 2595, 2621, and 2622 each coordinate S-adenosyl-L-methionine. Catalysis depends on aspartate 2636, which acts as the For 2'-O-MTase activity. Isoleucine 2637 is an S-adenosyl-L-methionine binding site. Active-site for 2'-O-MTase activity residues include lysine 2670 and glutamate 2706. S-adenosyl-L-methionine is bound at residue tyrosine 2708. Glutamate 2927, histidine 2931, cysteine 2936, and cysteine 2939 together coordinate Zn(2+). Residues 3018 to 3168 enclose the RdRp catalytic domain; that stretch reads AMYADDTAGW…PIDDRFANAL (151 aa). Zn(2+) contacts are provided by histidine 3202, cysteine 3218, and cysteine 3337.

The protein in the N-terminal section; belongs to the class I-like SAM-binding methyltransferase superfamily. mRNA cap 0-1 NS5-type methyltransferase family. In terms of assembly, homodimer. Interacts (via N-terminus) with host EXOC1 (via C-terminus); this interaction results in EXOC1 degradation through the proteasome degradation pathway. Forms heterodimers with envelope protein E in the endoplasmic reticulum and Golgi. As to quaternary structure, homodimer; in the endoplasmic reticulum and Golgi. Interacts with protein prM. Interacts with non-structural protein 1. In terms of assembly, homodimer; Homohexamer when secreted. Interacts with envelope protein E. Interacts (via N-terminus) with serine protease NS3. As to quaternary structure, forms a heterodimer with serine protease NS3. May form homooligomers. In terms of assembly, forms a heterodimer with NS2B. Interacts with NS4B. Interacts with unphosphorylated RNA-directed RNA polymerase NS5; this interaction stimulates RNA-directed RNA polymerase NS5 guanylyltransferase activity. Interacts with host MAVS; this interaction inhibits the synthesis of IFN-beta. Interacts with host AUP1; the interaction occurs in the presence of Dengue virus NS4B and induces lipophagy which facilitates production of virus progeny particles. As to quaternary structure, interacts with serine protease NS3. In terms of assembly, homodimer. Interacts with host STAT2; this interaction inhibits the phosphorylation of the latter, and, when all viral proteins are present (polyprotein), targets STAT2 for degradation. Interacts with serine protease NS3. Specific enzymatic cleavages in vivo yield mature proteins. Cleavages in the lumen of endoplasmic reticulum are performed by host signal peptidase, whereas cleavages in the cytoplasmic side are performed by serine protease NS3. Signal cleavage at the 2K-4B site requires a prior NS3 protease-mediated cleavage at the 4A-2K site. Post-translationally, cleaved in post-Golgi vesicles by a host furin, releasing the mature small envelope protein M, and peptide pr. This cleavage is incomplete as up to 30% of viral particles still carry uncleaved prM. In terms of processing, N-glycosylated. N-glycosylated. The excreted form is glycosylated and this is required for efficient secretion of the protein from infected cells. Post-translationally, acetylated by host KAT5. Acetylation modulates NS3 RNA-binding and unwinding activities and plays an important positive role for viral replication. In terms of processing, sumoylation of RNA-directed RNA polymerase NS5 increases NS5 protein stability allowing proper viral RNA replication. Phosphorylated on serines residues. This phosphorylation may trigger NS5 nuclear localization.

Its subcellular location is the virion. It is found in the host nucleus. It localises to the host cytoplasm. The protein localises to the host perinuclear region. The protein resides in the secreted. Its subcellular location is the virion membrane. It is found in the host endoplasmic reticulum membrane. It localises to the host mitochondrion. It catalyses the reaction Selective hydrolysis of -Xaa-Xaa-|-Yaa- bonds in which each of the Xaa can be either Arg or Lys and Yaa can be either Ser or Ala.. The enzyme catalyses RNA(n) + a ribonucleoside 5'-triphosphate = RNA(n+1) + diphosphate. The catalysed reaction is a ribonucleoside 5'-triphosphate + H2O = a ribonucleoside 5'-diphosphate + phosphate + H(+). It carries out the reaction ATP + H2O = ADP + phosphate + H(+). It catalyses the reaction a 5'-end (5'-triphosphoguanosine)-ribonucleoside in mRNA + S-adenosyl-L-methionine = a 5'-end (N(7)-methyl 5'-triphosphoguanosine)-ribonucleoside in mRNA + S-adenosyl-L-homocysteine. The enzyme catalyses a 5'-end (N(7)-methyl 5'-triphosphoguanosine)-ribonucleoside in mRNA + S-adenosyl-L-methionine = a 5'-end (N(7)-methyl 5'-triphosphoguanosine)-(2'-O-methyl-ribonucleoside) in mRNA + S-adenosyl-L-homocysteine + H(+). Plays a role in virus budding by binding to the cell membrane and gathering the viral RNA into a nucleocapsid that forms the core of a mature virus particle. During virus entry, may induce genome penetration into the host cytoplasm after hemifusion induced by the surface proteins. Can migrate to the cell nucleus where it modulates host functions. Overcomes the anti-viral effects of host EXOC1 by sequestering and degrading the latter through the proteasome degradation pathway. Its function is as follows. Inhibits RNA silencing by interfering with host Dicer. In terms of biological role, prevents premature fusion activity of envelope proteins in trans-Golgi by binding to envelope protein E at pH6.0. After virion release in extracellular space, gets dissociated from E dimers. Functionally, acts as a chaperone for envelope protein E during intracellular virion assembly by masking and inactivating envelope protein E fusion peptide. prM is the only viral peptide matured by host furin in the trans-Golgi network probably to avoid catastrophic activation of the viral fusion activity in acidic Golgi compartment prior to virion release. prM-E cleavage is inefficient, and many virions are only partially matured. These uncleaved prM would play a role in immune evasion. May play a role in virus budding. Exerts cytotoxic effects by activating a mitochondrial apoptotic pathway through M ectodomain. May display a viroporin activity. Its function is as follows. Binds to host cell surface receptor and mediates fusion between viral and cellular membranes. Envelope protein is synthesized in the endoplasmic reticulum in the form of heterodimer with protein prM. They play a role in virion budding in the ER, and the newly formed immature particle is covered with 60 spikes composed of heterodimer between precursor prM and envelope protein E. The virion is transported to the Golgi apparatus where the low pH causes dissociation of PrM-E heterodimers and formation of E homodimers. prM-E cleavage is inefficient, and many virions are only partially matured. These uncleaved prM would play a role in immune evasion. In terms of biological role, involved in immune evasion, pathogenesis and viral replication. Once cleaved off the polyprotein, is targeted to three destinations: the viral replication cycle, the plasma membrane and the extracellular compartment. Essential for viral replication. Required for formation of the replication complex and recruitment of other non-structural proteins to the ER-derived membrane structures. Excreted as a hexameric lipoparticle that plays a role against host immune response. Antagonizing the complement function. Binds to the host macrophages and dendritic cells. Inhibits signal transduction originating from Toll-like receptor 3 (TLR3). Functionally, disrupts the host endothelial glycocalyx layer of host pulmonary microvascular endothelial cells, inducing degradation of sialic acid and shedding of heparan sulfate proteoglycans. NS1 induces expression of sialidases, heparanase, and activates cathepsin L, which activates heparanase via enzymatic cleavage. These effects are probably linked to the endothelial hyperpermeability observed in severe dengue disease. Component of the viral RNA replication complex that functions in virion assembly and antagonizes the host immune response. Its function is as follows. Required cofactor for the serine protease function of NS3. May have membrane-destabilizing activity and form viroporins. In terms of biological role, displays three enzymatic activities: serine protease, NTPase and RNA helicase. NS3 serine protease, in association with NS2B, performs its autocleavage and cleaves the polyprotein at dibasic sites in the cytoplasm: C-prM, NS2A-NS2B, NS2B-NS3, NS3-NS4A, NS4A-2K and NS4B-NS5. NS3 RNA helicase binds RNA and unwinds dsRNA in the 3' to 5' direction. Functionally, regulates the ATPase activity of the NS3 helicase activity. NS4A allows NS3 helicase to conserve energy during unwinding. Plays a role in the inhibition of the host innate immune response. Interacts with host MAVS and thereby prevents the interaction between RIGI and MAVS. In turn, IFN-beta production is impaired. Interacts with host AUP1 which mediates induction of lipophagy in host cells and facilitates production of virus progeny particles. Functions as a signal peptide for NS4B and is required for the interferon antagonism activity of the latter. Its function is as follows. Induces the formation of ER-derived membrane vesicles where the viral replication takes place. Inhibits interferon (IFN)-induced host STAT1 phosphorylation and nuclear translocation, thereby preventing the establishment of cellular antiviral state by blocking the IFN-alpha/beta pathway. In terms of biological role, replicates the viral (+) and (-) RNA genome, and performs the capping of genomes in the cytoplasm. NS5 methylates viral RNA cap at guanine N-7 and ribose 2'-O positions. Besides its role in RNA genome replication, also prevents the establishment of cellular antiviral state by blocking the interferon-alpha/beta (IFN-alpha/beta) signaling pathway. Inhibits host TYK2 and STAT2 phosphorylation, thereby preventing activation of JAK-STAT signaling pathway. This chain is Genome polyprotein (pol), found in Dengue virus type 3 (strain Martinique/1243/1999) (DENV-3).